We begin with the raw amino-acid sequence, 139 residues long: General odorant-binding protein 56a (139 aa).

A signal peptide spans 1-19 (MNSYFVIALSALFVTLAVG). Asn-23 is a glycosylation site (N-linked (GlcNAc...) asparagine). Intrachain disulfides connect Cys-39/Cys-71, Cys-67/Cys-118, and Cys-109/Cys-127.

Belongs to the PBP/GOBP family. As to expression, expressed in ventral pits of larvae. In adults, it is not specifically expressed in chemosensory organs. Also expressed in stalk cells at the proximal tip of the wing disk.

The protein localises to the secreted. Functionally, present in the aqueous fluid surrounding olfactory sensory dendrites and are thought to aid in the capture and transport of hydrophobic odorants into and through this fluid. The chain is General odorant-binding protein 56a (Obp56a) from Drosophila melanogaster (Fruit fly).